The sequence spans 416 residues: Probable intermembrane transport protein HI_1671 (416 aa).

Helical transmembrane passes span 62–82 (ILILMPFSLNYPLLSLHLLGI), 107–127 (IFICAVVMPITFALLVIMLWL), 138–158 (VLLFLGYIKAWVMFDVYLVAL), 172–192 (EINIYLIPFIFTALLTTLLFI), 263–283 (LIAGIIMLFPANLLPISGIYL), 306–326 (FVAFVVFFASIFVPISKIFIM), 347–367 (LLHLVHFVGRWSMLDLFVLAL), and 377–397 (IINFTVGPGAFYFGAAVFCTM).

This sequence belongs to the PqiA family.

The protein localises to the cell inner membrane. This chain is Probable intermembrane transport protein HI_1671, found in Haemophilus influenzae (strain ATCC 51907 / DSM 11121 / KW20 / Rd).